The sequence spans 109 residues: Globin (109 aa).

In terms of domain architecture, Globin spans 3–109; sequence PLTAAEVSSL…IFPIAGIHAL (107 aa).

Belongs to the globin family. Monomer.

Its function is as follows. Oxygen binding protein. The polypeptide is Globin (Dicrocoelium dendriticum (Small liver fluke)).